We begin with the raw amino-acid sequence, 325 residues long: MEIEAVEKEAIEKLSKISNVQELESFRIEFLGKKGKITGLMKNLKNLPPEERPAYGKRVNELREKIEKLFEEKRQQIQRILEQEKMEKMRIDVTVPGARRKLGHSHPVLKVMEEIERIFVSMGFDVVEGPEIETTWHNFDALNTPEWHPARDEHDSFYITDDLLLRTHTSPVQIRTMLERKPPIAIISPGKVYRRDYDATHLPMFHQVEGLHVDRDLSVAHLKFTLEEFARRMFGEGAKVRLRPSFFPFTEPSFEVDVYLSGYGWLEILGAGMVDPNVFLNVGYDPEEWTGYAFGMGVERIAMLKYGITDIREFVRNDVRFLSSY.

Glutamate 251 lines the Mg(2+) pocket.

The protein belongs to the class-II aminoacyl-tRNA synthetase family. Phe-tRNA synthetase alpha subunit type 1 subfamily. As to quaternary structure, tetramer of two alpha and two beta subunits. Requires Mg(2+) as cofactor.

It localises to the cytoplasm. It catalyses the reaction tRNA(Phe) + L-phenylalanine + ATP = L-phenylalanyl-tRNA(Phe) + AMP + diphosphate + H(+). The polypeptide is Phenylalanine--tRNA ligase alpha subunit (Thermotoga petrophila (strain ATCC BAA-488 / DSM 13995 / JCM 10881 / RKU-1)).